Consider the following 514-residue polypeptide: ATP synthase subunit alpha (514 aa).

Position 170–177 (glycine 170–threonine 177) interacts with ATP.

This sequence belongs to the ATPase alpha/beta chains family. F-type ATPases have 2 components, CF(1) - the catalytic core - and CF(0) - the membrane proton channel. CF(1) has five subunits: alpha(3), beta(3), gamma(1), delta(1), epsilon(1). CF(0) has three main subunits: a(1), b(2) and c(9-12). The alpha and beta chains form an alternating ring which encloses part of the gamma chain. CF(1) is attached to CF(0) by a central stalk formed by the gamma and epsilon chains, while a peripheral stalk is formed by the delta and b chains.

The protein resides in the cell inner membrane. The catalysed reaction is ATP + H2O + 4 H(+)(in) = ADP + phosphate + 5 H(+)(out). Functionally, produces ATP from ADP in the presence of a proton gradient across the membrane. The alpha chain is a regulatory subunit. This chain is ATP synthase subunit alpha, found in Stutzerimonas stutzeri (strain A1501) (Pseudomonas stutzeri).